The chain runs to 169 residues: Small ribosomal subunit protein uS13m (169 aa).

The segment at 149–169 is disordered; sequence KKLQEKKNKEQKKSQKCKTKK. The span at 150–161 shows a compositional bias: basic and acidic residues; the sequence is KLQEKKNKEQKK.

Belongs to the universal ribosomal protein uS13 family. Part of the small ribosomal subunit.

Its subcellular location is the mitochondrion. Located at the top of the head of the small subunit, it contacts several helices of the small subunit rRNA. This is Small ribosomal subunit protein uS13m (mrps13) from Dictyostelium discoideum (Social amoeba).